We begin with the raw amino-acid sequence, 251 residues long: Pyridoxine 5'-phosphate synthase (251 aa).

Asparagine 7 contacts 3-amino-2-oxopropyl phosphate. Residue 9–10 (DH) coordinates 1-deoxy-D-xylulose 5-phosphate. A 3-amino-2-oxopropyl phosphate-binding site is contributed by arginine 18. Catalysis depends on histidine 43, which acts as the Proton acceptor. Residues arginine 45 and histidine 50 each contribute to the 1-deoxy-D-xylulose 5-phosphate site. Residue glutamate 70 is the Proton acceptor of the active site. A 1-deoxy-D-xylulose 5-phosphate-binding site is contributed by threonine 100. Histidine 198 functions as the Proton donor in the catalytic mechanism. 3-amino-2-oxopropyl phosphate-binding positions include alanine 199 and 220 to 221 (GH).

It belongs to the PNP synthase family. As to quaternary structure, homooctamer; tetramer of dimers.

The protein resides in the cytoplasm. The enzyme catalyses 3-amino-2-oxopropyl phosphate + 1-deoxy-D-xylulose 5-phosphate = pyridoxine 5'-phosphate + phosphate + 2 H2O + H(+). It functions in the pathway cofactor biosynthesis; pyridoxine 5'-phosphate biosynthesis; pyridoxine 5'-phosphate from D-erythrose 4-phosphate: step 5/5. Catalyzes the complicated ring closure reaction between the two acyclic compounds 1-deoxy-D-xylulose-5-phosphate (DXP) and 3-amino-2-oxopropyl phosphate (1-amino-acetone-3-phosphate or AAP) to form pyridoxine 5'-phosphate (PNP) and inorganic phosphate. This Aromatoleum aromaticum (strain DSM 19018 / LMG 30748 / EbN1) (Azoarcus sp. (strain EbN1)) protein is Pyridoxine 5'-phosphate synthase.